The following is a 344-amino-acid chain: Phosphate acyltransferase (344 aa).

The protein belongs to the PlsX family. In terms of assembly, homodimer. Probably interacts with PlsY.

Its subcellular location is the cytoplasm. The enzyme catalyses a fatty acyl-[ACP] + phosphate = an acyl phosphate + holo-[ACP]. It functions in the pathway lipid metabolism; phospholipid metabolism. Functionally, catalyzes the reversible formation of acyl-phosphate (acyl-PO(4)) from acyl-[acyl-carrier-protein] (acyl-ACP). This enzyme utilizes acyl-ACP as fatty acyl donor, but not acyl-CoA. The chain is Phosphate acyltransferase from Paracidovorax citrulli (strain AAC00-1) (Acidovorax citrulli).